A 528-amino-acid polypeptide reads, in one-letter code: Protein WHAT'S THIS FACTOR 1 homolog, chloroplastic (528 aa).

A chloroplast-targeting transit peptide spans 1–73 (MEPKLLLSAH…KTRVVVEPVR (73 aa)). In terms of domain architecture, PORR spans 80-408 (KELTFDSVVQ…VKEKMRALVS (329 aa)). Positions 410–528 (PRFPRRGGPR…FPDGTPREKW (119 aa)) are disordered. Residues 418 to 428 (PRKDEEGREVE) show a composition bias toward basic and acidic residues. Residues 429-491 (IDGSDADGEE…DDDDEDEEED (63 aa)) are compositionally biased toward acidic residues.

It is found in the plastid. The protein localises to the chloroplast. Functionally, RNA-binding protein involved in group II intron splicing. Binds specific group II introns and promotes their splicing. Functions in the context of a heterodimer with the ribonuclease III domain-containing protein RNC1. The sequence is that of Protein WHAT'S THIS FACTOR 1 homolog, chloroplastic from Arabidopsis thaliana (Mouse-ear cress).